The sequence spans 888 residues: Tyrosine-protein kinase receptor UFO (888 aa).

Residues Met-1 to Ala-18 form the signal peptide. Residues Ala-19 to Trp-86 are interaction with GAS6. The Extracellular portion of the chain corresponds to Ala-19–Trp-445. 2 consecutive Ig-like C2-type domains span residues Pro-30–Ser-122 and Pro-133–Thr-216. N-linked (GlcNAc...) asparagine glycosylation is present at Asn-37. A disulfide bridge links Cys-50 with Cys-111. N-linked (GlcNAc...) asparagine glycans are attached at residues Asn-151 and Asn-192. An intrachain disulfide couples Cys-154 to Cys-199. 2 Fibronectin type-III domains span residues Arg-221–Gly-325 and Pro-330–Pro-422. N-linked (GlcNAc...) asparagine glycans are attached at residues Asn-333, Asn-339, and Asn-395. A helical transmembrane segment spans residues Tyr-446–Val-466. Topologically, residues His-467 to Ala-888 are cytoplasmic. The Protein kinase domain maps to Val-530 to Leu-801. ATP-binding positions include Leu-536–Val-544 and Lys-561. Asp-666 functions as the Proton acceptor in the catalytic mechanism. A phosphotyrosine; by autocatalysis mark is found at Tyr-697, Tyr-773, and Tyr-815. Residues Glu-820–Cys-846 are disordered. Position 860 is a phosphotyrosine; by autocatalysis (Tyr-860). A disordered region spans residues Ser-865–Ala-888.

Belongs to the protein kinase superfamily. Tyr protein kinase family. AXL/UFO subfamily. Heterodimer and heterotetramer with ligand GAS6. Interacts with CBL, GRB2, LCK, NCK2, PIK3R1, PIK3R2, PIK3R3, PLCG1, SOCS1 and TNS2. Part of a complex including AXL, TNK2 and GRB2, in which GRB2 promotes AXL recruitment by TNK2. In terms of processing, monoubiquitinated upon GAS6-binding. A very small proportion of the receptor could be subjected to polyubiquitination in a very transient fashion. Post-translationally, phosphorylated at tyrosine residues by autocatalysis, which activates kinase activity. As to expression, in distinct substructures of a broad spectrum of developing tissues (in the late embryogenesis). In cells forming organ capsules as well as in connective tissue structures (in adult).

Its subcellular location is the cell membrane. It catalyses the reaction L-tyrosyl-[protein] + ATP = O-phospho-L-tyrosyl-[protein] + ADP + H(+). Its activity is regulated as follows. Activated by GAS6-binding and subsequent autophosphorylation. Functionally, receptor tyrosine kinase that transduces signals from the extracellular matrix into the cytoplasm by binding growth factor GAS6 and which is thus regulating many physiological processes including cell survival, cell proliferation, migration and differentiation. Ligand binding at the cell surface induces dimerization and autophosphorylation of AXL. Following activation by ligand, AXL binds and induces tyrosine phosphorylation of PI3-kinase subunits PIK3R1, PIK3R2 and PIK3R3; but also GRB2, PLCG1, LCK and PTPN11. Other downstream substrate candidates for AXL are CBL, NCK2, SOCS1 and TNS2. Recruitment of GRB2 and phosphatidylinositol 3 kinase regulatory subunits by AXL leads to the downstream activation of the AKT kinase. GAS6/AXL signaling plays a role in various processes such as endothelial cell survival during acidification by preventing apoptosis, optimal cytokine signaling during human natural killer cell development, hepatic regeneration, gonadotropin-releasing hormone neuron survival and migration, platelet activation, or regulation of thrombotic responses. Also plays an important role in inhibition of Toll-like receptors (TLRs)-mediated innate immune response. The polypeptide is Tyrosine-protein kinase receptor UFO (Axl) (Mus musculus (Mouse)).